A 192-amino-acid polypeptide reads, in one-letter code: Xanthine phosphoribosyltransferase (192 aa).

Positions 20 and 27 each coordinate xanthine. Residue 128 to 132 (ANGQA) coordinates 5-phospho-alpha-D-ribose 1-diphosphate. Position 156 (Lys156) interacts with xanthine.

Belongs to the purine/pyrimidine phosphoribosyltransferase family. Xpt subfamily. Homodimer.

It localises to the cytoplasm. The catalysed reaction is XMP + diphosphate = xanthine + 5-phospho-alpha-D-ribose 1-diphosphate. The protein operates within purine metabolism; XMP biosynthesis via salvage pathway; XMP from xanthine: step 1/1. In terms of biological role, converts the preformed base xanthine, a product of nucleic acid breakdown, to xanthosine 5'-monophosphate (XMP), so it can be reused for RNA or DNA synthesis. In Listeria innocua serovar 6a (strain ATCC BAA-680 / CLIP 11262), this protein is Xanthine phosphoribosyltransferase.